Reading from the N-terminus, the 775-residue chain is 1,4-alpha-glucan branching enzyme GlgB (775 aa).

The Nucleophile role is filled by aspartate 431. The active-site Proton donor is glutamate 484.

This sequence belongs to the glycosyl hydrolase 13 family. GlgB subfamily. Monomer.

The enzyme catalyses Transfers a segment of a (1-&gt;4)-alpha-D-glucan chain to a primary hydroxy group in a similar glucan chain.. It functions in the pathway glycan biosynthesis; glycogen biosynthesis. Functionally, catalyzes the formation of the alpha-1,6-glucosidic linkages in glycogen by scission of a 1,4-alpha-linked oligosaccharide from growing alpha-1,4-glucan chains and the subsequent attachment of the oligosaccharide to the alpha-1,6 position. The polypeptide is 1,4-alpha-glucan branching enzyme GlgB (Parasynechococcus marenigrum (strain WH8102)).